Consider the following 86-residue polypeptide: UPF0473 protein Clos_1662 (86 aa).

This sequence belongs to the UPF0473 family.

This chain is UPF0473 protein Clos_1662, found in Alkaliphilus oremlandii (strain OhILAs) (Clostridium oremlandii (strain OhILAs)).